The following is a 698-amino-acid chain: MAPRGFEDEELTISLSSSHVRRPQQQQPPPPTQQQHAHQPGSRPADAPLKERIKTEQRIGAYKVLRTLGEGSFGKVKLAIHNGTGQQVALKIIARKKLISRDMAGRVEREIEYLQLLRHPHIIKLYTVIKTPNEIIMVLEYAGGELFDYIVQHGRMKEAEARRFFQQMLCAVEYCHRHKIVHRDLKPENLLLDENLNVKIADFGLSNIMTDGNFLKTSCGSPNYAAPEVIGGKLYAGPEVDVWSCGVILYVLLVGRLPFDDEHIPSLFAKIAKGTYSIPQWMPLGAANLIKKMLVVNPVHRATIEDIRADPWFTTELPVYLQLPVEEFFNTGVDPNKAIQKNDIAPNAPEKVQERLHNEVTEKISKTMGYGKNDVEEALQASEPSAIKDAYMIVRENKMMQVNQHPEALLEPEGSSPMLSMSSARSATSTTTTTAPRPYVSKVGILPSSLPAYHKDYVEREKAGSVNNSPPQVLINDELPVTRTDAEKEETSRRLRPHSRSQLRLDEANTRPQGMTPINPPKKTKPVRWQFGIRSRNSPWEALLCIHKALHKLGATYIPDEDYESRHAEERAEASGNGSFADSYDGSRGSTTSIDPMKRYRLPADPWHINVRWDTSAIKKKLQGSADTPDKRQAHEPFVALHLDIQIYEMEHGVYLVDFKCSGYETATGRLLEEKEVTSPFPFLDMAAKLIMQLAEAD.

Residues 1–48 (MAPRGFEDEELTISLSSSHVRRPQQQQPPPPTQQQHAHQPGSRPADAP) are disordered. The Protein kinase domain maps to 62–313 (YKVLRTLGEG…IEDIRADPWF (252 aa)). ATP is bound by residues 68-76 (LGEGSFGKV) and Lys-91. Asp-184 (proton acceptor) is an active-site residue. The auto-inhibitory domain (AID) stretch occupies residues 320 to 417 (YLQLPVEEFF…ALLEPEGSSP (98 aa)). In terms of domain architecture, UBA spans 360-397 (VTEKISKTMGYGKNDVEEALQASEPSAIKDAYMIVREN). Disordered regions lie at residues 410–435 (LEPE…TTTA), 482–525 (TRTD…KKTK), and 564–597 (ESRH…IDPM). Positions 415-435 (SSPMLSMSSARSATSTTTTTA) are enriched in low complexity. Basic and acidic residues-rich tracts occupy residues 484–493 (TDAEKEETSR) and 564–573 (ESRHAEERAE).

This sequence belongs to the protein kinase superfamily. CAMK Ser/Thr protein kinase family. SNF1 subfamily. As to quaternary structure, component of the AMP-activated protein kinase complex also known as the SNF1 kinase complex (Snf1c), a heterotrimeric complex composed of a catalytic subunit alpha and 2 regulatory subunits beta and gamma.

The protein resides in the cytoplasm. It localises to the nucleus. The enzyme catalyses L-seryl-[protein] + ATP = O-phospho-L-seryl-[protein] + ADP + H(+). The catalysed reaction is L-threonyl-[protein] + ATP = O-phospho-L-threonyl-[protein] + ADP + H(+). In terms of biological role, catalytic subunit of the AMP-activated protein kinase complex also known as the SNF1 kinase complex (Snf1c), a central regulator of cellular energy homeostasis, which, in response to a fall in intracellular ATP levels, activates energy-producing pathways and inhibits energy-consuming processes. The complex phosphorylates histone H3 to form H3S10ph, which promotes H3K14ac formation, leading to transcriptional activation through TBP recruitment to the promoters. Activates the expression of the galactose oxidase (GOA) gene and of several cell wall-degrading enzymes (CWDEs) such as pectate lyase, xylanase and glucanase. Plays an important role in sudden death syndrome (SDS) by controlling the colonization of the infected roots. This Fusarium virguliforme protein is Sucrose non-fermenting protein kinase 1.